The primary structure comprises 375 residues: Alcohol dehydrogenase 1 (375 aa).

S2 is subject to N-acetylserine. Zn(2+) contacts are provided by C47, H68, C98, C101, C104, C112, and C175. NAD(+) is bound by residues 200–205, D224, and K229; that span reads GLGGVG. K234 bears the N6-succinyllysine mark. Position 293–295 (293–295) interacts with NAD(+); the sequence is VGV. Residue K340 is modified to N6-succinyllysine. R370 serves as a coordination point for NAD(+).

The protein belongs to the zinc-containing alcohol dehydrogenase family. Homodimer. Zn(2+) serves as cofactor.

The protein localises to the cytoplasm. The enzyme catalyses a primary alcohol + NAD(+) = an aldehyde + NADH + H(+). It catalyses the reaction a secondary alcohol + NAD(+) = a ketone + NADH + H(+). The protein is Alcohol dehydrogenase 1 (ADH1) of Oryctolagus cuniculus (Rabbit).